Consider the following 124-residue polypeptide: Fluoride-specific ion channel FluC (124 aa).

Transmembrane regions (helical) follow at residues 5–25, 35–55, 63–83, and 98–118; these read FLQVALGGALGSAARYGVNIL, LGTLSVNIAGCLAMGLLAALL, LAPFLLTGMLGGFTTFSAFAL, and LGYVLGSVVLSLAAVIAGLTV. The Na(+) site is built by G73 and T76.

The protein belongs to the fluoride channel Fluc/FEX (TC 1.A.43) family.

The protein resides in the cell inner membrane. The enzyme catalyses fluoride(in) = fluoride(out). Its activity is regulated as follows. Na(+) is not transported, but it plays an essential structural role and its presence is essential for fluoride channel function. Its function is as follows. Fluoride-specific ion channel. Important for reducing fluoride concentration in the cell, thus reducing its toxicity. The polypeptide is Fluoride-specific ion channel FluC (Paracoccus denitrificans (strain Pd 1222)).